The chain runs to 165 residues: Shikimate kinase (165 aa).

11–16 (GAGKTT) provides a ligand contact to ATP. Threonine 15 is a binding site for Mg(2+). Substrate-binding residues include aspartate 33, arginine 57, and glycine 78. An ATP-binding site is contributed by arginine 116. Arginine 134 lines the substrate pocket.

This sequence belongs to the shikimate kinase family. Monomer. Mg(2+) serves as cofactor.

The protein resides in the cytoplasm. The enzyme catalyses shikimate + ATP = 3-phosphoshikimate + ADP + H(+). It participates in metabolic intermediate biosynthesis; chorismate biosynthesis; chorismate from D-erythrose 4-phosphate and phosphoenolpyruvate: step 5/7. In terms of biological role, catalyzes the specific phosphorylation of the 3-hydroxyl group of shikimic acid using ATP as a cosubstrate. This chain is Shikimate kinase, found in Bacillus mycoides (strain KBAB4) (Bacillus weihenstephanensis).